The sequence spans 200 residues: Snake venom metalloproteinase BmooMP-I (200 aa).

The 196-residue stretch at 5–200 (RYIELAVVAD…HNPQCILNEP (196 aa)) folds into the Peptidase M12B domain. Ca(2+) is bound by residues Glu8 and Asp92. 3 disulfides stabilise this stretch: Cys116–Cys195, Cys155–Cys179, and Cys157–Cys162. His141 is a binding site for Zn(2+). Glu142 is a catalytic residue. His145 and His151 together coordinate Zn(2+). Cys195 and Asn198 together coordinate Ca(2+).

The protein belongs to the venom metalloproteinase (M12B) family. P-I subfamily. As to quaternary structure, monomer. It depends on Zn(2+) as a cofactor. As to expression, expressed by the venom gland.

The protein localises to the secreted. Functionally, zinc metalloprotease that displays fibrinogenolytic, gelatinase and weak hemorrhagic activities. Degrades the three chain of fibrinogen Aalpha-chain (FGA), Bbeta-chain (FGB), and gamma (FGG). This Bothrops moojeni (Lance-headed viper) protein is Snake venom metalloproteinase BmooMP-I.